We begin with the raw amino-acid sequence, 165 residues long: AIG2-like protein A (165 aa).

15–20 (YGSFQD) serves as a coordination point for substrate. E83 acts as the Proton acceptor in catalysis.

This sequence belongs to the gamma-glutamylcyclotransferase family. As to expression, expressed only in seeds.

Putative gamma-glutamylcyclotransferase. This is AIG2-like protein A from Arabidopsis thaliana (Mouse-ear cress).